The sequence spans 384 residues: Calreticulin-3 (384 aa).

Positions 1–19 (MAAARVPLWAICVRRVALA) are cleaved as a signal peptide. The tract at residues 20–197 (TVYFQEEFLD…GQSIESGSIE (178 aa)) is N-domain. N-linked (GlcNAc...) asparagine glycosylation occurs at Asn42. Cys105 and Cys137 form a disulfide bridge. Residues Tyr109, Lys111, Tyr128, and Asp135 each coordinate an alpha-D-glucoside. 7 consecutive repeat copies span residues 191 to 202 (IESGSIEYDWQL), 209 to 220 (EKASAEAEGWDQ), 222 to 231 (AKDKSQDWEK), 235 to 246 (DASASKPSDWKG), 250 to 260 (GDWQAAMLQKP), 264 to 272 (DGLKPEGID), and 274 to 284 (DVWLHQKMKNS). A 4 X approximate repeats region spans residues 191 to 246 (IESGSIEYDWQLTSLKKMEKASAEAEGWDQAAKDKSQDWEKHFLDASASKPSDWKG). The interval 198–294 (YDWQLTSLKK…YLTEYDLSEF (97 aa)) is P-domain. Residues 250–284 (GDWQAAMLQKPPYQDGLKPEGIDKDVWLHQKMKNS) are 3 X approximate repeats. A C-domain region spans residues 295 to 384 (ENIGAVGLEL…FKGFHRRNEF (90 aa)). Glu303 provides a ligand contact to an alpha-D-glucoside. Residues 381–384 (RNEF) carry the Prevents secretion from ER motif.

The protein belongs to the calreticulin family. As to quaternary structure, component of an EIF2 complex at least composed of CELF1/CUGBP1, CALR, CALR3, EIF2S1, EIF2S2, HSP90B1 and HSPA5.

Its subcellular location is the endoplasmic reticulum lumen. Functionally, during spermatogenesis, may act as a lectin-independent chaperone for specific client proteins such as ADAM3. CALR3 capacity for calcium-binding may be absent or much lower than that of CALR. Required for sperm fertility. The protein is Calreticulin-3 (CALR3) of Bos taurus (Bovine).